The sequence spans 334 residues: Phospho-N-acetylmuramoyl-pentapeptide-transferase (334 aa).

10 consecutive transmembrane segments (helical) span residues 11–31, 55–75, 84–104, 124–144, 158–178, 184–204, 205–225, 233–253, 258–278, and 311–331; these read GAGL…IPLM, PTMG…IFAP, LIIA…DDYI, VGLA…GTAV, PLYY…VNFA, LLGG…ALAL, GQTD…GFLH, IFMG…LAVL, FLLV…ILQV, and LFWG…PGML.

Belongs to the glycosyltransferase 4 family. MraY subfamily. Mg(2+) is required as a cofactor.

It is found in the cell membrane. It catalyses the reaction UDP-N-acetyl-alpha-D-muramoyl-L-alanyl-gamma-D-glutamyl-meso-2,6-diaminopimeloyl-D-alanyl-D-alanine + di-trans,octa-cis-undecaprenyl phosphate = di-trans,octa-cis-undecaprenyl diphospho-N-acetyl-alpha-D-muramoyl-L-alanyl-D-glutamyl-meso-2,6-diaminopimeloyl-D-alanyl-D-alanine + UMP. Its pathway is cell wall biogenesis; peptidoglycan biosynthesis. In terms of biological role, catalyzes the initial step of the lipid cycle reactions in the biosynthesis of the cell wall peptidoglycan: transfers peptidoglycan precursor phospho-MurNAc-pentapeptide from UDP-MurNAc-pentapeptide onto the lipid carrier undecaprenyl phosphate, yielding undecaprenyl-pyrophosphoryl-MurNAc-pentapeptide, known as lipid I. The chain is Phospho-N-acetylmuramoyl-pentapeptide-transferase from Symbiobacterium thermophilum (strain DSM 24528 / JCM 14929 / IAM 14863 / T).